The primary structure comprises 675 residues: UvrABC system protein B (675 aa).

The region spanning 35-422 is the Helicase ATP-binding domain; the sequence is EGVSDGLMFQ…ADNVVEQVVR (388 aa). Residue 48–55 participates in ATP binding; the sequence is GVTGSGKT. The Beta-hairpin signature appears at 101–124; that stretch reads YYDYYQPEAYVPTRDLFIEKDSSI. One can recognise a Helicase C-terminal domain in the interval 439 to 605; it reads QVDDLLGEIH…GVSKAVRELI (167 aa). The UVR domain maps to 633-668; the sequence is AREIRRLEKLMMDHARNLEFEQAAAARDALNALKSR.

The protein belongs to the UvrB family. In terms of assembly, forms a heterotetramer with UvrA during the search for lesions. Interacts with UvrC in an incision complex.

The protein localises to the cytoplasm. Its function is as follows. The UvrABC repair system catalyzes the recognition and processing of DNA lesions. A damage recognition complex composed of 2 UvrA and 2 UvrB subunits scans DNA for abnormalities. Upon binding of the UvrA(2)B(2) complex to a putative damaged site, the DNA wraps around one UvrB monomer. DNA wrap is dependent on ATP binding by UvrB and probably causes local melting of the DNA helix, facilitating insertion of UvrB beta-hairpin between the DNA strands. Then UvrB probes one DNA strand for the presence of a lesion. If a lesion is found the UvrA subunits dissociate and the UvrB-DNA preincision complex is formed. This complex is subsequently bound by UvrC and the second UvrB is released. If no lesion is found, the DNA wraps around the other UvrB subunit that will check the other stand for damage. The polypeptide is UvrABC system protein B (Bordetella bronchiseptica (strain ATCC BAA-588 / NCTC 13252 / RB50) (Alcaligenes bronchisepticus)).